The following is a 257-amino-acid chain: UPF0246 protein BT_3869 (257 aa).

It belongs to the UPF0246 family.

The sequence is that of UPF0246 protein BT_3869 from Bacteroides thetaiotaomicron (strain ATCC 29148 / DSM 2079 / JCM 5827 / CCUG 10774 / NCTC 10582 / VPI-5482 / E50).